The chain runs to 477 residues: Aspartyl/glutamyl-tRNA(Asn/Gln) amidotransferase subunit B (477 aa).

Belongs to the GatB/GatE family. GatB subfamily. As to quaternary structure, heterotrimer of A, B and C subunits.

It catalyses the reaction L-glutamyl-tRNA(Gln) + L-glutamine + ATP + H2O = L-glutaminyl-tRNA(Gln) + L-glutamate + ADP + phosphate + H(+). The catalysed reaction is L-aspartyl-tRNA(Asn) + L-glutamine + ATP + H2O = L-asparaginyl-tRNA(Asn) + L-glutamate + ADP + phosphate + 2 H(+). Its function is as follows. Allows the formation of correctly charged Asn-tRNA(Asn) or Gln-tRNA(Gln) through the transamidation of misacylated Asp-tRNA(Asn) or Glu-tRNA(Gln) in organisms which lack either or both of asparaginyl-tRNA or glutaminyl-tRNA synthetases. The reaction takes place in the presence of glutamine and ATP through an activated phospho-Asp-tRNA(Asn) or phospho-Glu-tRNA(Gln). This chain is Aspartyl/glutamyl-tRNA(Asn/Gln) amidotransferase subunit B, found in Nitrosococcus oceani (strain ATCC 19707 / BCRC 17464 / JCM 30415 / NCIMB 11848 / C-107).